The primary structure comprises 542 residues: La-related protein 7 homolog (542 aa).

In terms of domain architecture, HTH La-type RNA-binding spans 112–239 (VAEELDIKES…KRRFPFNLEQ (128 aa)). Positions 247-335 (RTLYIDFLPP…GSIRIITYKK (89 aa)) constitute an RRM domain. One can recognise a xRRM domain in the interval 374–542 (EIKQNCLIKI…KQNITQNYNK (169 aa)).

Belongs to the LARP7 family. Component of the telomerase holoenzyme complex, composed of the catalytic core (the catalytic subunit TERT, the telomerase RNA template component TER and TAP65/p65), which is associated with two heterotrimeric subcomplexes: (i) the replication protein A (RPA)-related subcomplex, composed of TEB1, RPA2/TEB2 and RPA3/TEB3 and (ii) the CST-like subcomplex, composed of TAP75/p75, TAP45/p45 and TAP19/p19. TEB1 and the CST-like subcomplex are tethered to the catalytic core by TAP50/p50.

Its subcellular location is the chromosome. The protein resides in the telomere. RNA-binding protein required for assembly of the holoenzyme telomerase ribonucleoprotein (RNP) complex. Telomerase is an essential ribonucleoprotein enzyme that copies new telomeric repeats onto chromosome ends by repetitively synthesizing the short telomere-repeat sequence 5'-TTGGGG-3' using an RNA template component TER. TAP65/p65 specifically binds telomerase RNA template TER and is required for biogenesis and placement of the TER stem-terminus element: TAP65/p65 first protects the 3'-end of TER from degradation and acts as a chaperone to correctly fold TER for protein binding; it then bends TER stem-loop IV to position it for interaction of stem-loop IV with catalytic TERT RNA-binding domain. In Tetrahymena thermophila (strain SB210), this protein is La-related protein 7 homolog.